The chain runs to 1021 residues: Sodium/potassium-transporting ATPase subunit alpha-1 (1021 aa).

Residues 1-5 (MGKGV) constitute a propeptide that is removed on maturation. Residues 1–11 (MGKGVGRDKYE) are compositionally biased toward basic and acidic residues. The disordered stretch occupies residues 1–36 (MGKGVGRDKYEPAAVSEHGDKKKAKKERDMDELKKE). Residues 6-85 (GRDKYEPAAV…NALTPPPTTP (80 aa)) lie on the Cytoplasmic side of the membrane. Position 9 is an N6-acetyllysine (Lys-9). The residue at position 10 (Tyr-10) is a Phosphotyrosine. Ser-16 carries the post-translational modification Phosphoserine; by PKC. The residue at position 21 (Lys-21) is an N6-acetyllysine. Residues 26 to 36 (KERDMDELKKE) show a composition bias toward basic and acidic residues. Residues Ser-38 and Ser-45 each carry the phosphoserine modification. Positions 80-82 (PPP) are phosphoinositide-3 kinase binding. The chain crosses the membrane as a helical span at residues 86 to 106 (EWVKFCRQLFGGFSMLLWIGA). The Extracellular portion of the chain corresponds to 107-129 (VLCFLAYGIQAATEEEPQNDNLY). The helical transmembrane segment at 130-150 (LGVVLSAVVIITGCFSYYQEA) threads the bilayer. The Cytoplasmic portion of the chain corresponds to 151–286 (KSSKIMESFK…GGQTPIAAEI (136 aa)). Ser-226 is subject to Phosphoserine. A Phosphotyrosine modification is found at Tyr-258. The chain crosses the membrane as a helical span at residues 287 to 306 (EHFIHIITGVAVFLGVSFFI). The Extracellular portion of the chain corresponds to 307–318 (LSLILEYTWLEA). The helical transmembrane segment at 319 to 336 (VIFLIGIIVANVPEGLLA) threads the bilayer. The Cytoplasmic segment spans residues 337–770 (TVTVCLTLTA…EEGRLIFDNL (434 aa)). Asp-374 functions as the 4-aspartylphosphate intermediate in the catalytic mechanism. 2 positions are modified to phosphoserine: Ser-450 and Ser-482. Lys-485 provides a ligand contact to ATP. Tyr-540 carries the phosphotyrosine modification. The tract at residues 594–715 (RAAVPDAVGK…QGAIVAVTGD (122 aa)) is mediates interaction with SCN7A. Residue Ser-666 is modified to Phosphoserine. Positions 715 and 719 each coordinate Mg(2+). Residues 771 to 790 (KKSIAYTLTSNIPEITPFLI) traverse the membrane as a helical segment. The Extracellular segment spans residues 791 to 800 (FIIANIPLPL). Residues 801 to 821 (GTVTILCIDLGTDMVPAISLA) traverse the membrane as a helical segment. The Cytoplasmic portion of the chain corresponds to 822–841 (YEQAESDIMKRQPRNPQTDK). The helical transmembrane segment at 842–864 (LVNERLISMAYGQIGMIQALGGF) threads the bilayer. Residues 865 to 916 (FTYFVIMAENGFLPNHLLGIRVTWDDRWINDVEDSYGQQWTYEQRKIVEFTC) are Extracellular-facing. Residues 917–936 (HTAFFVSIVVVQWADLVICK) traverse the membrane as a helical segment. The Cytoplasmic segment spans residues 937–949 (TRRNSVFQQGMKN). Ser-941 carries the phosphoserine; by PKA modification. Residues 950-968 (KILIFGLFEETALAAFLSY) form a helical membrane-spanning segment. Topologically, residues 969-983 (CPGMGVALRMYPLKP) are extracellular. Residues 984 to 1004 (TWWFCAFPYSLLIFVYDEVRK) traverse the membrane as a helical segment. Over 1005–1021 (LIIRRRPGGWVEKETYY) the chain is Cytoplasmic.

It belongs to the cation transport ATPase (P-type) (TC 3.A.3) family. Type IIC subfamily. The sodium/potassium-transporting ATPase is composed of a catalytic alpha subunit, an auxiliary non-catalytic beta subunit and an additional regulatory subunit. Interacts with regulatory subunit FXYD1. Interacts with regulatory subunit FXYD3. Interacts with SIK1. Interacts with SLC35G1 and STIM1. Interacts with CLN3; this interaction regulates the sodium/potassium-transporting ATPase complex localization at the plasma membrane. Interacts with SCN7A; activates ATP1A1 P-type sodium:potassium-exchanging transporter activity which indirectly signals to nearby neurons to regulate sodium homeostasis. Post-translationally, phosphorylation on Tyr-10 modulates pumping activity. Phosphorylation of Ser-941 by PKA modulates the response of ATP1A1 to PKC. Dephosphorylation by protein phosphatase 2A (PP2A) following increases in intracellular sodium, leading to increase catalytic activity.

The protein resides in the cell membrane. The protein localises to the basolateral cell membrane. It is found in the sarcolemma. It localises to the cell projection. Its subcellular location is the axon. The protein resides in the melanosome. It catalyses the reaction K(+)(out) + Na(+)(in) + ATP + H2O = K(+)(in) + Na(+)(out) + ADP + phosphate + H(+). With respect to regulation, specifically inhibited by cardiac glycosides such as digoxin or ouabain. Functionally, this is the catalytic component of the active enzyme, which catalyzes the hydrolysis of ATP coupled with the exchange of sodium and potassium ions across the plasma membrane. This action creates the electrochemical gradient of sodium and potassium ions, providing the energy for active transport of various nutrients. Could also be part of an osmosensory signaling pathway that senses body-fluid sodium levels and controls salt intake behavior as well as voluntary water intake to regulate sodium homeostasis. The protein is Sodium/potassium-transporting ATPase subunit alpha-1 (ATP1A1) of Ovis aries (Sheep).